The primary structure comprises 265 residues: HTH-type transcriptional activator CfaD (265 aa).

The region spanning 164–261 is the HTH araC/xylS-type domain; that stretch reads DKVRNVIEKD…GVTPKQFFTY (98 aa). DNA-binding regions (H-T-H motif) lie at residues 181-202 and 228-251; these read GIIA…ESEN and ISQI…NKHY.

In terms of assembly, homodimer.

In terms of biological role, transcriptional activator of the CFA/I adhesin (cfaA and cfaB) genes of enterotoxigenic E.coli at 37 degrees Celsius. Also represses the silencing effect of H-NS (hns). This chain is HTH-type transcriptional activator CfaD, found in Escherichia coli.